We begin with the raw amino-acid sequence, 344 residues long: Ion-translocating oxidoreductase complex subunit D (344 aa).

Helical transmembrane passes span 23–43 (LVLG…GPGT), 44–64 (LLNL…MLAL), 77–99 (SALV…WLTL), and 120–140 (PFNP…LEMT). An FMN phosphoryl threonine modification is found at threonine 172. The next 5 helical transmembrane spans lie at 198 to 218 (LGSA…LFLL), 222 to 242 (LFTW…SLLF), 252 to 272 (GSPL…FIVT), 285 to 305 (LVFG…GGYP), and 306 to 326 (DGVA…DYYT).

It belongs to the NqrB/RnfD family. The complex is composed of six subunits: RnfA, RnfB, RnfC, RnfD, RnfE and RnfG. FMN is required as a cofactor.

Its subcellular location is the cell inner membrane. Functionally, part of a membrane-bound complex that couples electron transfer with translocation of ions across the membrane. The chain is Ion-translocating oxidoreductase complex subunit D from Pseudomonas aeruginosa (strain UCBPP-PA14).